An 883-amino-acid chain; its full sequence is MKIEKLIIKDFRSHALTKVNFSSGINLIIGQNGSGKSSILDALLVGLYWPSKPKDLKKDDFERINGSGTEITVFFEKGNVKYQIHRNIGRGLAFVKYHDGSSWKTLETGQKPVRDWMEKLVPYDVFLNAIYIRQGEIDAILESDESREKVVRQVLGLDRYENSYKNLLDVRKEIDARIKAIEDYLKSTENIDELIGNLEKELTSVLREINEISPKLPELRGELGGLEKELKELEKTAEELAKARVELKSEEGNLRELEAKKSGIQSMIRETEKRVEELKEKVKELESLEEKAKEYERLSRFYRNFTEGINRIEKLLATYSQQAENLRERIDELSKKEARVKELLKEKEGLQKELGALEEDLKAYQRAKELMANLERLKKRLTLSEEEIEKLEAEIQKARERKEEIMKELEEIGSRRGELKSIAGERNKALMELKKAKGRCPVCGRELTEEHRKELLEKYTAELKEISAEMKELEKREKKLRAELVEVEKTLKKERELFALKEVLEQIRETEEKLKEYDLEKLEEANEKAEELKKKLAGLEGEIKSLEDEIKKGELLKKKLALVEKKLRELEEERASLLGELKKLGFGDVKELEERLKELEPAYKRYIELRPARDELKREEDLLKSLKLDLTAILKEIEKTSKRVEELRKRVEELEKSYDKDRHEELKGKTRELSNELAGLEARLKSLEERRDEVKASLEKLREEKETRKEKAKELEKLKKARERVQRLREKVKAYKNLLKEGALAKVGEMASEIFEELTEEKYSGVTVKAEENKVRLGVVYNGKEYGLGFLSGGERIALGLAFRLALSLYLAGEISLLILDEPTPYLDEERRRRLVDIMQRYLRKIPQVIVVSHDEELKDAADRVIRVSLENGVSVVREAEVG.

ATP-binding positions include Arg12, 32 to 38 (NGSGKSS), and Gln134. A coiled-coil region spans residues 218 to 420 (ELRGELGGLE…EIGSRRGELK (203 aa)). The 98-residue stretch at 395–492 (IQKARERKEE…ELVEVEKTLK (98 aa)) folds into the Zinc-hook domain. 2 residues coordinate Zn(2+): Cys440 and Cys443. 2 coiled-coil regions span residues 452–585 (RKEL…KKLG) and 620–741 (EDLL…LLKE). An ATP-binding site is contributed by 790–795 (FLSGGE).

The protein belongs to the SMC family. RAD50 subfamily. In terms of assembly, homodimer. Forms a heterotetramer composed of two Mre11 subunits and two Rad50 subunits. Zn(2+) is required as a cofactor.

Part of the Rad50/Mre11 complex, which is involved in the early steps of DNA double-strand break (DSB) repair. The complex may facilitate opening of the processed DNA ends to aid in the recruitment of HerA and NurA. Rad50 controls the balance between DNA end bridging and DNA resection via ATP-dependent structural rearrangements of the Rad50/Mre11 complex. In Thermococcus kodakarensis (strain ATCC BAA-918 / JCM 12380 / KOD1) (Pyrococcus kodakaraensis (strain KOD1)), this protein is DNA double-strand break repair Rad50 ATPase.